Consider the following 226-residue polypeptide: uncharacterized protein (226 aa).

The 223-residue stretch at 4 to 226 (LQFQQVGYWY…FTVKENVAVV (223 aa)) folds into the ABC transporter domain. 38–45 (GTSGTGKT) serves as a coordination point for ATP.

This sequence belongs to the ABC transporter superfamily.

This is an uncharacterized protein from Bacillus subtilis (strain 168).